Consider the following 390-residue polypeptide: Heparan sulfate glucosamine 3-O-sulfotransferase 3B1 (390 aa).

The segment at 1–25 (MGQRLSGGRSCLDVPGRLLPQPPPP) is disordered. Residues 1–32 (MGQRLSGGRSCLDVPGRLLPQPPPPPPPVRRK) lie on the Cytoplasmic side of the membrane. The helical; Signal-anchor for type II membrane protein transmembrane segment at 33 to 53 (LALLFAMLCVWLYMFLYSCAG) threads the bilayer. Residues 54 to 390 (SCAAAPGLLL…QMTGHDFGWD (337 aa)) are Lumenal-facing. A disordered region spans residues 74–133 (PPALATAPDGTPPRLPFRAPPATPLASGKEMAEGAASPEEQSPEVPDSPSPISSFFSGSG). Residues 83–96 (GTPPRLPFRAPPAT) show a composition bias toward pro residues. Positions 123-133 (SPISSFFSGSG) are enriched in low complexity. 147–151 (KGGTR) provides a ligand contact to 3'-phosphoadenylyl sulfate. Substrate is bound by residues 169 to 175 (EPHFFDR) and 200 to 203 (KTPS). 2 residues coordinate 3'-phosphoadenylyl sulfate: R228 and S236. The N-linked (GlcNAc...) asparagine glycan is linked to N258. Residue 268–269 (WS) participates in substrate binding. N329 carries N-linked (GlcNAc...) asparagine glycosylation. C336 and C348 are oxidised to a cystine. 353–357 (KGRTH) provides a ligand contact to 3'-phosphoadenylyl sulfate.

The protein belongs to the sulfotransferase 1 family. Ubiquitous. Most abundant in liver and placenta, followed by heart and kidney.

The protein resides in the golgi apparatus membrane. It carries out the reaction alpha-D-glucosaminyl-[heparan sulfate](n) + 3'-phosphoadenylyl sulfate = 3-sulfo-alpha-D-glucosaminyl-[heparan sulfate](n) + adenosine 3',5'-bisphosphate + H(+). Functionally, sulfotransferase that utilizes 3'-phospho-5'-adenylyl sulfate (PAPS) to catalyze the transfer of a sulfo group to an N-unsubstituted glucosamine linked to a 2-O-sulfo iduronic acid unit on heparan sulfate. Catalyzes the O-sulfation of glucosamine in IdoUA2S-GlcNS and also in IdoUA2S-GlcNH2. The substrate-specific O-sulfation generates an enzyme-modified heparan sulfate which acts as a binding receptor to Herpes simplex virus-1 (HSV-1) and permits its entry. Unlike HS3ST1/3-OST-1, does not convert non-anticoagulant heparan sulfate to anticoagulant heparan sulfate. The chain is Heparan sulfate glucosamine 3-O-sulfotransferase 3B1 (HS3ST3B1) from Homo sapiens (Human).